The sequence spans 214 residues: Large ribosomal subunit protein uL3 (214 aa).

Residues 129-155 (FGRGPMSHGSKNHRRPGSVGAGTTPGR) form a disordered region.

The protein belongs to the universal ribosomal protein uL3 family. Part of the 50S ribosomal subunit. Forms a cluster with proteins L14 and L19.

Functionally, one of the primary rRNA binding proteins, it binds directly near the 3'-end of the 23S rRNA, where it nucleates assembly of the 50S subunit. The protein is Large ribosomal subunit protein uL3 of Synechococcus sp. (strain JA-3-3Ab) (Cyanobacteria bacterium Yellowstone A-Prime).